A 399-amino-acid polypeptide reads, in one-letter code: uncharacterized protein (399 aa).

It belongs to the AdoMet synthetase 2 family.

This is an uncharacterized protein from Streptococcus pyogenes serotype M1.